The primary structure comprises 61 residues: Small ribosomal subunit protein uS14 (61 aa).

Cys-24, Cys-27, Cys-40, and Cys-43 together coordinate Zn(2+).

Belongs to the universal ribosomal protein uS14 family. Zinc-binding uS14 subfamily. As to quaternary structure, part of the 30S ribosomal subunit. Contacts proteins S3 and S10. The cofactor is Zn(2+).

Functionally, binds 16S rRNA, required for the assembly of 30S particles and may also be responsible for determining the conformation of the 16S rRNA at the A site. This is Small ribosomal subunit protein uS14 from Clostridium botulinum (strain 657 / Type Ba4).